The sequence spans 612 residues: UvrABC system protein C (612 aa).

Positions 20-98 (THSGVYRMLD…IKQHRPKYNI (79 aa)) constitute a GIY-YIG domain. Residues 208–243 (SSVLEEISAKMYQASEDMEYEKAQVYRDQLVVLRKL) enclose the UVR domain.

Belongs to the UvrC family. In terms of assembly, interacts with UvrB in an incision complex.

It is found in the cytoplasm. The UvrABC repair system catalyzes the recognition and processing of DNA lesions. UvrC both incises the 5' and 3' sides of the lesion. The N-terminal half is responsible for the 3' incision and the C-terminal half is responsible for the 5' incision. The sequence is that of UvrABC system protein C from Francisella tularensis subsp. tularensis (strain FSC 198).